Consider the following 385-residue polypeptide: Homoserine O-succinyltransferase (385 aa).

An AB hydrolase-1 domain is found at 51 to 360 (NAVLICHALS…DSPHGHDAFL (310 aa)). Ser-157 functions as the Nucleophile in the catalytic mechanism. Arg-227 is a substrate binding site. Residues Asp-323 and His-356 contribute to the active site. Asp-357 contributes to the substrate binding site.

The protein belongs to the AB hydrolase superfamily. MetX family. Homodimer.

The protein localises to the cytoplasm. It catalyses the reaction L-homoserine + succinyl-CoA = O-succinyl-L-homoserine + CoA. Its pathway is amino-acid biosynthesis; L-methionine biosynthesis via de novo pathway; O-succinyl-L-homoserine from L-homoserine: step 1/1. Functionally, transfers a succinyl group from succinyl-CoA to L-homoserine, forming succinyl-L-homoserine. In Hahella chejuensis (strain KCTC 2396), this protein is Homoserine O-succinyltransferase.